The sequence spans 234 residues: MGPGGRVARLLAPLMWRRAVSSVAGSAVGAEPGLRLLAVQRLPVGAAFCRACQTPNFVRGLHSEPGLEERAEGTVNEGRPESDAADHTGPKFDIDMMVSLLRQENARDICVIQVPPEMRYTDYFVIVSGTSTRHLHAMAFYVVKMYKHLKCKRDPHVKIEGKDTDDWLCVDFGSMVIHLMLPETREIYELEKLWTLRSYDDQLAQIAPETVPEDFILGIEDDTSSVTPVELKCE.

A disordered region spans residues S63 to T88.

The protein belongs to the Iojap/RsfS family. Associates with the mitochondrial ribosome large subunit (39S) via interaction with MRPL12 and/or MRPL14. The interaction generates steric hindrance that is expected to prevent premature association of the 28S and 39S ribosomal subunits. Interacts with intermediates of the mitochondrial ribosome large subunit (mt-LSU) (recruits the mitochondrial ribosome and complex I assembly factor AltMIEF1 and NDUFAB1); regulates mitochondrial ribosomes assembly. Interacts with MRPL12 and MRPL14.

The protein localises to the mitochondrion matrix. Its function is as follows. Required for normal mitochondrial ribosome function and mitochondrial translation. May play a role in ribosome biogenesis by preventing premature association of the 28S and 39S ribosomal subunits. Interacts with mitochondrial ribosomal protein uL14m (MRPL14), probably blocking formation of intersubunit bridge B8, preventing association of the 28S and 39S ribosomal subunits. Addition to isolated mitochondrial ribosomal subunits partially inhibits translation, probably by interfering with the association of the 28S and 39S ribosomal subunits and the formation of functional ribosomes. May also participate in the assembly and/or regulation of the stability of the large subunit of the mitochondrial ribosome. May function as a ribosomal silencing factor. In Homo sapiens (Human), this protein is Mitochondrial assembly of ribosomal large subunit protein 1 (MALSU1).